Consider the following 238-residue polypeptide: MPLKDLPLDAQPREKLLARGPAALSDAELLAILLRTGLAGKGVLQLAQELLDDPVRDSATGRSAGGGFGGIAGLLHASSQDLQRIKGLGPAKRAELMAVLELARRALAQQLREREVFDSPQAVQHYLQLHLAGRTHEVFAVLFLDSGNRLIAMEELFRGTLTQTSVYPREVVLRALHHHAAAVVLAHNHPSGSVQPSRADEALTQTLKAALALVDVRVLDHVIVAPGAALSMAEQGLV.

The region spanning 116-238 (VFDSPQAVQH…ALSMAEQGLV (123 aa)) is the MPN domain. Zn(2+)-binding residues include H187, H189, and D200. The JAMM motif signature appears at 187–200 (HNHPSGSVQPSRAD).

It belongs to the UPF0758 family.

This chain is UPF0758 protein Ajs_3450, found in Acidovorax sp. (strain JS42).